The following is a 134-amino-acid chain: UPF0102 protein SYNW1051 (134 aa).

This sequence belongs to the UPF0102 family.

This chain is UPF0102 protein SYNW1051, found in Parasynechococcus marenigrum (strain WH8102).